A 183-amino-acid chain; its full sequence is Orotate phosphoribosyltransferase (183 aa).

Residues R21, K88, and 112-120 (EDVVTTGES) each bind 5-phospho-alpha-D-ribose 1-diphosphate. Orotate contacts are provided by T116 and R144.

It belongs to the purine/pyrimidine phosphoribosyltransferase family. PyrE subfamily. In terms of assembly, homodimer. The cofactor is Mg(2+).

The catalysed reaction is orotidine 5'-phosphate + diphosphate = orotate + 5-phospho-alpha-D-ribose 1-diphosphate. Its pathway is pyrimidine metabolism; UMP biosynthesis via de novo pathway; UMP from orotate: step 1/2. Its function is as follows. Catalyzes the transfer of a ribosyl phosphate group from 5-phosphoribose 1-diphosphate to orotate, leading to the formation of orotidine monophosphate (OMP). This chain is Orotate phosphoribosyltransferase, found in Thermus thermophilus (strain ATCC BAA-163 / DSM 7039 / HB27).